Reading from the N-terminus, the 522-residue chain is MEDIEKLLLQEKILMLELDLVRAKISLARAKGSMQQGGNSLHRETPVKEEAVHSALATFAPIQAKAIPEQTAPGKESTNPLMVSILPKDMKSVQTEKKRLVTPMDFLRPNQGIQIPQKSEPNSSVAPNRAESGIQHPHSNYYVVYNGPHAGIYDDWGSAKAATNGVPGVAHKKFATITEARAAADVYTTAQQAERLNFIPKGEAQLKPKSFVKALTSPPKQKAQWLTLGVKKPSSDPAPKEVSFDQETTMDDFLYLYDLGRRFDGEGDDTVFTTDNESISLFNFRKNANPEMIREAYNAGLIRTIYPSNNLQEIKYLPKKVKDAVKKFRTNCIKNTEKDIFLKIKSTIPVWQDQGLLHKPKHVIEIGVSKKIVPKESKAMESKDHSEDLIELATKTGEQFIQSLLRLNDKKKIFVNLVEHDTLVYSKNTKETVSEDQRAIETFQQRVITPNLLGFHCPSICHFIKRTVEKEGGAYKCHHCDKGKAIVQDASADSKVADKEGPPLTTNVEKEDVSTTSSKASG.

Positions 111–126 (QGIQIPQKSEPNSSVA) are enriched in polar residues. 2 disordered regions span residues 111–133 (QGIQIPQKSEPNSSVAPNRAESG) and 491–522 (SADSKVADKEGPPLTTNVEKEDVSTTSSKASG).

It belongs to the caulimoviridae viroplasmin family.

It localises to the host cytoplasm. Functionally, enhances the ribosomal termination-reinitiation event leading to the translation of major open reading frames on the polycistronic viral RNAs. The protein is Transactivator/viroplasmin protein of Arabidopsis thaliana (Mouse-ear cress).